We begin with the raw amino-acid sequence, 498 residues long: uncharacterized protein (498 aa).

This is an uncharacterized protein from Acanthamoeba polyphaga (Amoeba).